A 355-amino-acid chain; its full sequence is Holliday junction branch migration complex subunit RuvB (355 aa).

A large ATPase domain (RuvB-L) region spans residues 4-190 (TDKLAAERII…FGIVARLEFY (187 aa)). Residues L29, R30, G71, K74, T75, T76, 137–139 (EDY), R180, Y190, and R227 contribute to the ATP site. T75 lines the Mg(2+) pocket. Residues 191–261 (DAEQLSRIVR…VADAALAMLD (71 aa)) are small ATPAse domain (RuvB-S). Residues 264–355 (PVGFDLMDRK…GSMWNTPDGA (92 aa)) are head domain (RuvB-H). DNA contacts are provided by R300, R319, and R324.

The protein belongs to the RuvB family. Homohexamer. Forms an RuvA(8)-RuvB(12)-Holliday junction (HJ) complex. HJ DNA is sandwiched between 2 RuvA tetramers; dsDNA enters through RuvA and exits via RuvB. An RuvB hexamer assembles on each DNA strand where it exits the tetramer. Each RuvB hexamer is contacted by two RuvA subunits (via domain III) on 2 adjacent RuvB subunits; this complex drives branch migration. In the full resolvosome a probable DNA-RuvA(4)-RuvB(12)-RuvC(2) complex forms which resolves the HJ.

Its subcellular location is the cytoplasm. It catalyses the reaction ATP + H2O = ADP + phosphate + H(+). The RuvA-RuvB-RuvC complex processes Holliday junction (HJ) DNA during genetic recombination and DNA repair, while the RuvA-RuvB complex plays an important role in the rescue of blocked DNA replication forks via replication fork reversal (RFR). RuvA specifically binds to HJ cruciform DNA, conferring on it an open structure. The RuvB hexamer acts as an ATP-dependent pump, pulling dsDNA into and through the RuvAB complex. RuvB forms 2 homohexamers on either side of HJ DNA bound by 1 or 2 RuvA tetramers; 4 subunits per hexamer contact DNA at a time. Coordinated motions by a converter formed by DNA-disengaged RuvB subunits stimulates ATP hydrolysis and nucleotide exchange. Immobilization of the converter enables RuvB to convert the ATP-contained energy into a lever motion, pulling 2 nucleotides of DNA out of the RuvA tetramer per ATP hydrolyzed, thus driving DNA branch migration. The RuvB motors rotate together with the DNA substrate, which together with the progressing nucleotide cycle form the mechanistic basis for DNA recombination by continuous HJ branch migration. Branch migration allows RuvC to scan DNA until it finds its consensus sequence, where it cleaves and resolves cruciform DNA. The protein is Holliday junction branch migration complex subunit RuvB of Burkholderia vietnamiensis (strain G4 / LMG 22486) (Burkholderia cepacia (strain R1808)).